The primary structure comprises 54 residues: uncharacterized protein (54 aa).

The segment at Met-1–Thr-54 is disordered.

This is an uncharacterized protein from Mycobacterium tuberculosis (strain ATCC 25618 / H37Rv).